Here is a 248-residue protein sequence, read N- to C-terminus: ATP synthase subunit a, chloroplastic (248 aa).

The next 5 membrane-spanning stretches (helical) occupy residues Q38 to V58, V96 to F116, I135 to T155, L200 to L220, and G221 to G241.

It belongs to the ATPase A chain family. F-type ATPases have 2 components, CF(1) - the catalytic core - and CF(0) - the membrane proton channel. CF(1) has five subunits: alpha(3), beta(3), gamma(1), delta(1), epsilon(1). CF(0) has four main subunits: a, b, b' and c.

The protein resides in the plastid. It localises to the chloroplast thylakoid membrane. Key component of the proton channel; it plays a direct role in the translocation of protons across the membrane. The chain is ATP synthase subunit a, chloroplastic from Cryptomeria japonica (Japanese cedar).